The primary structure comprises 428 residues: GTPase Obg (428 aa).

Residues 1-158 (MFVDQVKIYV…RDVILELKVL (158 aa)) form the Obg domain. Positions 159 to 329 (ADVGLVGFPS…LLFEVANLIE (171 aa)) constitute an OBG-type G domain. GTP contacts are provided by residues 165–172 (GFPSVGKS), 190–194 (FTTIV), 212–215 (DLPG), 282–285 (NKMD), and 310–312 (SAV). Mg(2+) is bound by residues serine 172 and threonine 192. The OCT domain occupies 350 to 428 (KFETEGVKFD…ILEYEFEFID (79 aa)).

This sequence belongs to the TRAFAC class OBG-HflX-like GTPase superfamily. OBG GTPase family. As to quaternary structure, monomer. Requires Mg(2+) as cofactor.

Its subcellular location is the cytoplasm. Functionally, an essential GTPase which binds GTP, GDP and possibly (p)ppGpp with moderate affinity, with high nucleotide exchange rates and a fairly low GTP hydrolysis rate. Plays a role in control of the cell cycle, stress response, ribosome biogenesis and in those bacteria that undergo differentiation, in morphogenesis control. This is GTPase Obg from Bacillus cereus (strain AH820).